Consider the following 782-residue polypeptide: MARARAGALLALWVLGAAAHPQCLDFRPPFRPTQPLRLCAQYSDFGCCDEGRDAELTRRFWALASRVDAAEWAACAGYARDLLCQECSPYAAHLYDAEDPFTPLRTVPGLCQDYCLDMWHKCRGLFRHLSTDQELWALEGNLARFCRYLSLDDTDYCFPYLLVNKNLNSNLGHVVADAKGCLQLCLEEVANGLRNPVAMVHARDGTHRFFVAEQVGLVWAYLPDRSRLGKPFLNISRVVLTSPWEGDERGFLGIAFHPSFQHNRRLYVYYSVGIRSSEWIRISEFRVSEDDENAVDHSSERIILEVKEPASNHNGGQLLFGDDGYLYIFTGDGGMAGDPFGTFGNAQNKSALLGKVLRIDVDRKERGLPYGIPPDNPFVGDPAAQPEVYALGVRNMWRCSFDRGDPSSGTGRGRLFCGDVGQNKFEEVDVVERGGNYGWRAREGFECYDRSLCANTSLNDLLPIFAYPHTVGKSVTGGYVYRGCEYPNLNGLYIFGDFMSGRLMSLQENPGTGQWQYSEICMGHGQTCEFPGLINNYYPYIISFGEDEAGELYFMSTGEPSATAPRGVVYKIIDASRRAPPGKCQIQPAQVKIRSRLIPFVPKEKFIPKTRSTPRPTARAPTRAPRRGRPTAAPPAPTPRPARPTQQPGSRRGGGRRRGRLNSASRAFRDGEVRLVRPAGLSSGSGRVEVFVGGRWGTVCDDSWNISGAAVVCRQLGFAYAVRAVKRAEFGQGGSLPILLDDVRCAGWERNLLECQHNGVGTHNCEHDEDAGVVCSHQNPDL.

Positions 1 to 19 (MARARAGALLALWVLGAAA) are cleaved as a signal peptide. Intrachain disulfides connect C181–C521, C185–C528, C399–C417, and C484–C584. A glycan (N-linked (GlcNAc...) asparagine) is linked at N234. The tract at residues 604–666 (EKFIPKTRST…RRGRLNSASR (63 aa)) is disordered. A compositionally biased stretch (low complexity) spans 610-623 (TRSTPRPTARAPTR). Residues 632-642 (AAPPAPTPRPA) are compositionally biased toward pro residues. The SRCR domain occupies 673–776 (VRLVRPAGLS…HDEDAGVVCS (104 aa)). 3 disulfide bridges follow: C700/C765, C713/C775, and C745/C755.

This sequence belongs to the HHIP family.

The protein localises to the secreted. The sequence is that of HHIP-like protein 1 (HHIPL1) from Homo sapiens (Human).